A 1018-amino-acid chain; its full sequence is D-2-hydroxyglutarate dehydrogenase (1018 aa).

The region spanning 48 to 281 is the FAD-binding PCMH-type domain; the sequence is YQLLPDAVVF…TEARLDITRL (234 aa). (R)-2-hydroxyglutarate-binding residues include Arg-402 and His-500. The 4Fe-4S ferredoxin-type domain maps to 662–695; it reads FSHEVKEAMSGCLACKACSTQCPIKIDVPEFRSR. The [4Fe-4S] cluster site is built by Cys-673, Cys-676, Cys-679, and Cys-683.

It in the N-terminal section; belongs to the FAD-binding oxidoreductase/transferase type 4 family. Homotetramer. [4Fe-4S] cluster is required as a cofactor. FAD serves as cofactor.

The enzyme catalyses (R)-2-hydroxyglutarate + A = 2-oxoglutarate + AH2. Activity is completely inhibited by the addition of 0.5 mM Mn(2+), Ni(2+), or Co(2+) and partially inhibited by 0.5 mM Zn(2+). Catalyzes the oxidation of D-2-hydroxyglutarate (D-2-HGA) to 2-oxoglutarate. Appears to be the only D2HGDH in E.coli, providing the way to recycle D-2-HGA produced during L-serine synthesis by SerA, by converting it back to 2-oxoglutarate. The physiological molecule that functions as the primary electron acceptor during D-2-HGA oxidation by YdiJ in E.coli is unknown. Shows strict substrate specificity towards D-2-HGA, since it has no detectable activity on L-2-hydroxyglutarate, L-malate, D-malate, L-lactate, D-lactate, L-tartrate, D-tartrate, L-glycerate, D-glycerate, glutarate, or pyruvate. The polypeptide is D-2-hydroxyglutarate dehydrogenase (ydiJ) (Escherichia coli (strain K12)).